We begin with the raw amino-acid sequence, 245 residues long: Endonuclease III (245 aa).

Residues 119–138 (MDKLVTLPGVGRKTANVILG) enclose the HhH domain. [4Fe-4S] cluster contacts are provided by C198, C205, C208, and C214.

This sequence belongs to the Nth/MutY family. [4Fe-4S] cluster is required as a cofactor.

It catalyses the reaction 2'-deoxyribonucleotide-(2'-deoxyribose 5'-phosphate)-2'-deoxyribonucleotide-DNA = a 3'-end 2'-deoxyribonucleotide-(2,3-dehydro-2,3-deoxyribose 5'-phosphate)-DNA + a 5'-end 5'-phospho-2'-deoxyribonucleoside-DNA + H(+). DNA repair enzyme that has both DNA N-glycosylase activity and AP-lyase activity. The DNA N-glycosylase activity releases various damaged pyrimidines from DNA by cleaving the N-glycosidic bond, leaving an AP (apurinic/apyrimidinic) site. The AP-lyase activity cleaves the phosphodiester bond 3' to the AP site by a beta-elimination, leaving a 3'-terminal unsaturated sugar and a product with a terminal 5'-phosphate. Has a preference for oxidized pyrimidines, such as thymine glycol (prefers 5S isomers) 5,6-dihydrouracil:G, 5-hydroxyuracil:G, 5-hydroxycytosine:G and urea:A. Cleaves ssDNA containing an AP site. The sequence is that of Endonuclease III from Mycobacterium tuberculosis (strain ATCC 25618 / H37Rv).